The chain runs to 362 residues: Alpha-2-HS-glycoprotein (362 aa).

Residues 1-15 form the signal peptide; the sequence is LILFFCLAQLWGCRA. Residues 24–130 form the Cystatin fetuin-A-type 1 domain; it reads YREPACDDVE…QFSVLFAKCD (107 aa). Cystine bridges form between Cys29–Cys353, Cys86–Cys97, Cys111–Cys129, Cys143–Cys146, Cys205–Cys216, and Cys227–Cys244. An N-linked (GlcNAc...) asparagine glycan is attached at Asn96. A phosphoserine mark is found at Ser131, Ser132, and Ser135. The 112-residue stretch at 141–252 folds into the Cystatin fetuin-A-type 2 domain; it reads KVCPNCPLLA…TCTVFQTQPV (112 aa). Residues Asn153 and Asn173 are each glycosylated (N-linked (GlcNAc...) asparagine). Phosphoserine is present on residues Ser314, Ser318, Ser321, and Ser323. Thr332 carries an O-linked (GalNAc...) threonine glycan.

The protein belongs to the fetuin family. In terms of processing, phosphorylated by FAM20C in the extracellular medium. Expressed by the liver and secreted in plasma.

It is found in the secreted. This is Alpha-2-HS-glycoprotein (AHSG) from Sus scrofa (Pig).